Here is a 204-residue protein sequence, read N- to C-terminus: Ribonuclease HII (204 aa).

Residues 1–197 enclose the RNase H type-2 domain; the sequence is MILGIDEAGR…KNCILNPKLL (197 aa). A divalent metal cation contacts are provided by aspartate 6, glutamate 7, and aspartate 103.

The protein belongs to the RNase HII family. The cofactor is Mn(2+). Mg(2+) is required as a cofactor.

It is found in the cytoplasm. The catalysed reaction is Endonucleolytic cleavage to 5'-phosphomonoester.. Functionally, endonuclease that specifically degrades the RNA of RNA-DNA hybrids. The sequence is that of Ribonuclease HII from Helicobacter pylori (strain P12).